The primary structure comprises 95 residues: Scytovirin (95 aa).

The tract at residues glycine 3–threonine 41 is SD1. 5 disulfide bridges follow: cysteine 7/cysteine 55, cysteine 20/cysteine 32, cysteine 26/cysteine 38, cysteine 68/cysteine 80, and cysteine 74/cysteine 86. Residues glycine 51–threonine 89 form an SD2 region.

Its function is as follows. Has strong anti-HIV activity against T-tropic strains of HIV-1 and weaker activity against M-tropic strains of HIV-1. Inhibits HIV-1 fusion and infection of CD4 LTR beta-gal cells in vitro. Inhibits fusion of HIV infected CEM-SS cells with uninfected CEM-SS cells, and fusion of HIV-1 Env expressing HL2/3 cells with CD4 LTR beta-gal cells. Binds to HIV gp120, HIV gp160 and to a lesser extent HIV gp41. Binding to HIV gp120 is glycosylation dependent. Binds with high specificity to the tetrasaccharide Man-alpha-1,2-Man-alpha-1,6-Man-alpha-1,6-Man and also binds the higher-order oligosaccharides oligomannose 8 and oligomannose 9. Does not bind to monosaccharides, complex or hybrid N-linked oligosaccharides or chitin. This Scytonema varium protein is Scytovirin.